A 339-amino-acid polypeptide reads, in one-letter code: DNA-directed RNA polymerase subunit alpha (339 aa).

The tract at residues Met-1–Glu-233 is alpha N-terminal domain (alpha-NTD). Residues Lys-264–Phe-339 form an alpha C-terminal domain (alpha-CTD) region.

This sequence belongs to the RNA polymerase alpha chain family. In terms of assembly, in plastids the minimal PEP RNA polymerase catalytic core is composed of four subunits: alpha, beta, beta', and beta''. When a (nuclear-encoded) sigma factor is associated with the core the holoenzyme is formed, which can initiate transcription.

It is found in the plastid. The protein localises to the chloroplast. The enzyme catalyses RNA(n) + a ribonucleoside 5'-triphosphate = RNA(n+1) + diphosphate. DNA-dependent RNA polymerase catalyzes the transcription of DNA into RNA using the four ribonucleoside triphosphates as substrates. The protein is DNA-directed RNA polymerase subunit alpha of Elymus hystrix (Eastern bottlebrush grass).